The following is a 738-amino-acid chain: Protostadienol synthase A (738 aa).

Residues lysine 132–glycine 173 form a PFTB 1 repeat. The active-site Proton donor is aspartate 463. 3 PFTB repeats span residues leucine 490–valine 531, valine 567–glycine 607, and cysteine 616–glycine 663.

Belongs to the terpene cyclase/mutase family.

The catalysed reaction is (S)-2,3-epoxysqualene = (17Z)-protosta-17(20),24-dien-3beta-ol. Functionally, protostadienol synthase which cyclizes (3S)-oxidosqualene to (17Z)-protosta-17(20),24-dien-3-beta-ol (protostadienol), the biosynthetic precursor of helvolic acid, a secondary metabolite which promotes virulence. The sequence is that of Protostadienol synthase A (pdsA) from Neosartorya fischeri (strain ATCC 1020 / DSM 3700 / CBS 544.65 / FGSC A1164 / JCM 1740 / NRRL 181 / WB 181) (Aspergillus fischerianus).